Here is a 670-residue protein sequence, read N- to C-terminus: UvrABC system protein B (670 aa).

The 388-residue stretch at 25-412 (EGLEAGLSHQ…AGRVIEQVVR (388 aa)) folds into the Helicase ATP-binding domain. Position 38–45 (38–45 (GVTGSGKT)) interacts with ATP. A Beta-hairpin motif is present at residues 91-114 (YYDYYQPEAYVPSSDTYIEKDSSI). The 154-residue stretch at 429 to 582 (QVDDLLSQIR…QIAFNEAHGI (154 aa)) folds into the Helicase C-terminal domain. One can recognise a UVR domain in the interval 631–666 (SKRIRQLEEKMYQLARDLEFEAAAQLRDEIQTLRER).

Belongs to the UvrB family. In terms of assembly, forms a heterotetramer with UvrA during the search for lesions. Interacts with UvrC in an incision complex.

The protein resides in the cytoplasm. Its function is as follows. The UvrABC repair system catalyzes the recognition and processing of DNA lesions. A damage recognition complex composed of 2 UvrA and 2 UvrB subunits scans DNA for abnormalities. Upon binding of the UvrA(2)B(2) complex to a putative damaged site, the DNA wraps around one UvrB monomer. DNA wrap is dependent on ATP binding by UvrB and probably causes local melting of the DNA helix, facilitating insertion of UvrB beta-hairpin between the DNA strands. Then UvrB probes one DNA strand for the presence of a lesion. If a lesion is found the UvrA subunits dissociate and the UvrB-DNA preincision complex is formed. This complex is subsequently bound by UvrC and the second UvrB is released. If no lesion is found, the DNA wraps around the other UvrB subunit that will check the other stand for damage. The polypeptide is UvrABC system protein B (Pseudomonas aeruginosa (strain ATCC 15692 / DSM 22644 / CIP 104116 / JCM 14847 / LMG 12228 / 1C / PRS 101 / PAO1)).